Consider the following 196-residue polypeptide: Holliday junction branch migration complex subunit RuvA (196 aa).

Positions 1–63 (MIASVRGEVL…EDSMTLYGFP (63 aa)) are domain I. The segment at 64 to 138 (DGETRDLFLT…DKVGVAATGG (75 aa)) is domain II. The interval 138-142 (GALST) is flexible linker. The segment at 143-196 (NGHAVRSPVVEALVGLGFAAKQAEEATDTVLAANHDATTSSALRSALSLLGKAR) is domain III.

This sequence belongs to the RuvA family. Homotetramer. Forms an RuvA(8)-RuvB(12)-Holliday junction (HJ) complex. HJ DNA is sandwiched between 2 RuvA tetramers; dsDNA enters through RuvA and exits via RuvB. An RuvB hexamer assembles on each DNA strand where it exits the tetramer. Each RuvB hexamer is contacted by two RuvA subunits (via domain III) on 2 adjacent RuvB subunits; this complex drives branch migration. In the full resolvosome a probable DNA-RuvA(4)-RuvB(12)-RuvC(2) complex forms which resolves the HJ.

Its subcellular location is the cytoplasm. The RuvA-RuvB-RuvC complex processes Holliday junction (HJ) DNA during genetic recombination and DNA repair, while the RuvA-RuvB complex plays an important role in the rescue of blocked DNA replication forks via replication fork reversal (RFR). RuvA specifically binds to HJ cruciform DNA, conferring on it an open structure. The RuvB hexamer acts as an ATP-dependent pump, pulling dsDNA into and through the RuvAB complex. HJ branch migration allows RuvC to scan DNA until it finds its consensus sequence, where it cleaves and resolves the cruciform DNA. The sequence is that of Holliday junction branch migration complex subunit RuvA from Mycobacterium bovis (strain ATCC BAA-935 / AF2122/97).